Here is a 137-residue protein sequence, read N- to C-terminus: uncharacterized protein (137 aa).

A helical transmembrane segment spans residues 111–131 (LAVGVLVGSNLVVGSLVFALL).

The protein localises to the membrane. This is an uncharacterized protein from Saccharomyces cerevisiae (strain ATCC 204508 / S288c) (Baker's yeast).